A 521-amino-acid polypeptide reads, in one-letter code: Bifunctional purine biosynthesis protein PurH (521 aa).

One can recognise an MGS-like domain in the interval 1 to 145; sequence MIKQALISVS…KNHRDVTVVV (145 aa).

The protein belongs to the PurH family.

The enzyme catalyses (6R)-10-formyltetrahydrofolate + 5-amino-1-(5-phospho-beta-D-ribosyl)imidazole-4-carboxamide = 5-formamido-1-(5-phospho-D-ribosyl)imidazole-4-carboxamide + (6S)-5,6,7,8-tetrahydrofolate. It catalyses the reaction IMP + H2O = 5-formamido-1-(5-phospho-D-ribosyl)imidazole-4-carboxamide. Its pathway is purine metabolism; IMP biosynthesis via de novo pathway; 5-formamido-1-(5-phospho-D-ribosyl)imidazole-4-carboxamide from 5-amino-1-(5-phospho-D-ribosyl)imidazole-4-carboxamide (10-formyl THF route): step 1/1. It functions in the pathway purine metabolism; IMP biosynthesis via de novo pathway; IMP from 5-formamido-1-(5-phospho-D-ribosyl)imidazole-4-carboxamide: step 1/1. This chain is Bifunctional purine biosynthesis protein PurH, found in Paraburkholderia phytofirmans (strain DSM 17436 / LMG 22146 / PsJN) (Burkholderia phytofirmans).